A 252-amino-acid polypeptide reads, in one-letter code: MNKVVVKNVTFGEGAPKICVPMVGKTVAALKEEAEMLQTIDLDVVEWRVDFFEDVKDLAKVEAALDEIRTILPETPILFTFRSAKEGGELAVGDEFYFELNETLASTGKIDLVDVELFNEETDVLRLIETAHKNNVKVVMSNHDFDKTPAKEEIVSRLTRMEALGADLPKIAVMPKSAGDVLTLLDATNTVSEKANQPIITMSMAGTGVISRLAGEVFGSAMTFGAAKKASAPGQIDVNELRHVLDLLHKQF.

3-dehydroquinate is bound by residues 46-48 (EWR) and R82. H143 acts as the Proton donor/acceptor in catalysis. Catalysis depends on K170, which acts as the Schiff-base intermediate with substrate. Residues R212, S231, and Q235 each coordinate 3-dehydroquinate.

It belongs to the type-I 3-dehydroquinase family. In terms of assembly, homodimer.

The enzyme catalyses 3-dehydroquinate = 3-dehydroshikimate + H2O. The protein operates within metabolic intermediate biosynthesis; chorismate biosynthesis; chorismate from D-erythrose 4-phosphate and phosphoenolpyruvate: step 3/7. Involved in the third step of the chorismate pathway, which leads to the biosynthesis of aromatic amino acids. Catalyzes the cis-dehydration of 3-dehydroquinate (DHQ) and introduces the first double bond of the aromatic ring to yield 3-dehydroshikimate. The protein is 3-dehydroquinate dehydratase of Listeria monocytogenes serotype 4b (strain F2365).